The primary structure comprises 294 residues: 4-hydroxy-tetrahydrodipicolinate synthase (294 aa).

Position 45 (Thr45) interacts with pyruvate. Residue Tyr133 is the Proton donor/acceptor of the active site. Residue Lys161 is the Schiff-base intermediate with substrate of the active site. Ile203 provides a ligand contact to pyruvate.

This sequence belongs to the DapA family. As to quaternary structure, homotetramer; dimer of dimers.

The protein resides in the cytoplasm. It carries out the reaction L-aspartate 4-semialdehyde + pyruvate = (2S,4S)-4-hydroxy-2,3,4,5-tetrahydrodipicolinate + H2O + H(+). It participates in amino-acid biosynthesis; L-lysine biosynthesis via DAP pathway; (S)-tetrahydrodipicolinate from L-aspartate: step 3/4. Its function is as follows. Catalyzes the condensation of (S)-aspartate-beta-semialdehyde [(S)-ASA] and pyruvate to 4-hydroxy-tetrahydrodipicolinate (HTPA). The chain is 4-hydroxy-tetrahydrodipicolinate synthase from Buchnera aphidicola subsp. Schizaphis graminum (strain Sg).